The primary structure comprises 368 residues: ATP-dependent (S)-NAD(P)H-hydrate dehydratase (368 aa).

Residues leucine 13–leucine 357 enclose the YjeF C-terminal domain. (6S)-NADPHX is bound by residues glycine 125 and asparagine 178 to arginine 184. Residues lysine 231–aspartate 235 and glycine 250–glycine 259 each bind ATP. Aspartate 260 serves as a coordination point for (6S)-NADPHX.

Belongs to the NnrD/CARKD family. Mg(2+) serves as cofactor.

Its subcellular location is the cytoplasm. The catalysed reaction is (6S)-NADHX + ATP = ADP + phosphate + NADH + H(+). The enzyme catalyses (6S)-NADPHX + ATP = ADP + phosphate + NADPH + H(+). Functionally, catalyzes the dehydration of the S-form of NAD(P)HX at the expense of ATP, which is converted to ADP. Together with NAD(P)HX epimerase, which catalyzes the epimerization of the S- and R-forms, the enzyme allows the repair of both epimers of NAD(P)HX, a damaged form of NAD(P)H that is a result of enzymatic or heat-dependent hydration. This is ATP-dependent (S)-NAD(P)H-hydrate dehydratase from Aspergillus fumigatus (strain ATCC MYA-4609 / CBS 101355 / FGSC A1100 / Af293) (Neosartorya fumigata).